Reading from the N-terminus, the 451-residue chain is AP-4 complex subunit mu (451 aa).

The MHD domain maps to 184-450 (REEIFVDIIE…VTQANSYVAR (267 aa)).

The protein belongs to the adaptor complexes medium subunit family. As to quaternary structure, adaptor protein complex 4 (AP-4) is a heterotetramer composed of two large adaptins (epsilon-type subunit and beta-type subunit), a medium adaptin (mu-type subunit) and a small adaptin (sigma-type subunit).

Its subcellular location is the golgi apparatus. It is found in the trans-Golgi network. The protein resides in the membrane. It localises to the coated pit. Functionally, subunit of novel type of clathrin- or non-clathrin-associated protein coat involved in targeting proteins from the trans-Golgi network (TGN) to the endosomal-lysosomal system. This chain is AP-4 complex subunit mu (AP4M), found in Arabidopsis thaliana (Mouse-ear cress).